The following is a 379-amino-acid chain: Lipid-A-disaccharide synthase (379 aa).

The protein belongs to the LpxB family.

The catalysed reaction is a lipid X + a UDP-2-N,3-O-bis[(3R)-3-hydroxyacyl]-alpha-D-glucosamine = a lipid A disaccharide + UDP + H(+). It participates in bacterial outer membrane biogenesis; LPS lipid A biosynthesis. Its function is as follows. Condensation of UDP-2,3-diacylglucosamine and 2,3-diacylglucosamine-1-phosphate to form lipid A disaccharide, a precursor of lipid A, a phosphorylated glycolipid that anchors the lipopolysaccharide to the outer membrane of the cell. The sequence is that of Lipid-A-disaccharide synthase from Persephonella marina (strain DSM 14350 / EX-H1).